The following is a 367-amino-acid chain: Popeye domain-containing protein 2 (367 aa).

N4 carries N-linked (GlcNAc...) asparagine glycosylation. Transmembrane regions (helical) follow at residues 36 to 56 (FLLM…LFGI) and 77 to 97 (IVLW…QLVY). Disordered stretches follow at residues 273–292 (PSAS…ALEA) and 312–367 (APPA…TPEL). The segment covering 278–290 (GEPESEKDDEEAL) has biased composition (acidic residues). Polar residues predominate over residues 344-356 (PLQNSSQVMSRSQ). A glycan (N-linked (GlcNAc...) asparagine) is linked at N347. T364 carries the phosphothreonine modification.

It belongs to the popeye family. As to expression, expressed in the developing and adult heart, with high expression levels in the sinus and atrioventricular nodes. Also expressed in the bladder and skeletal muscle.

It localises to the membrane. The protein localises to the cell membrane. Its subcellular location is the sarcolemma. Its function is as follows. Important for the maintenance of cardiac function. Plays a regulatory function in heart rate dynamics mediated, at least in part, through cAMP-binding and, probably, by increasing cell surface expression of the potassium channel KCNK2 and enhancing current density. The chain is Popeye domain-containing protein 2 (Popdc2) from Mus musculus (Mouse).